The following is a 282-amino-acid chain: L-allo-isoleucyltransferase (282 aa).

The Acyl-thioester intermediate role is filled by Cys105. The AB hydrolase-1 domain occupies 169-261; that stretch reads HTQSTYTPSD…DGQHHDFVDG (93 aa).

The protein belongs to the AB hydrolase superfamily.

The catalysed reaction is holo-[CmaD peptidyl-carrier protein] + L-alloisoleucyl-[CmaA peptidyl-carrier protein] = L-alloisoleucyl-[CmaD peptidyl-carrier protein] + holo-[CmaA peptidyl-carrier protein]. Functionally, involved in the biosynthesis of the phytotoxin coronatine (COR). Catalyzes the transfer of the aminoacyl group covalently attached to the pantetheinyl arm of CmaA to the holo-pantetheinyl arm of CmaD. During the shuttling process, CmaE generates a covalent-aminoacyl-S-Cys enzyme intermediate by the action of its donor substrate L-aminoacyl-S-CmaA and delivers it to the sulfhydryl group attached to the phosphopantetheinyl arm on CmaD. The protein is L-allo-isoleucyltransferase of Pseudomonas savastanoi pv. glycinea (Pseudomonas syringae pv. glycinea).